The following is a 273-amino-acid chain: Putative pyruvate, phosphate dikinase regulatory protein (273 aa).

153-160 provides a ligand contact to ADP; the sequence is GVSRTSKS.

This sequence belongs to the pyruvate, phosphate/water dikinase regulatory protein family. PDRP subfamily.

It catalyses the reaction N(tele)-phospho-L-histidyl/L-threonyl-[pyruvate, phosphate dikinase] + ADP = N(tele)-phospho-L-histidyl/O-phospho-L-threonyl-[pyruvate, phosphate dikinase] + AMP + H(+). It carries out the reaction N(tele)-phospho-L-histidyl/O-phospho-L-threonyl-[pyruvate, phosphate dikinase] + phosphate + H(+) = N(tele)-phospho-L-histidyl/L-threonyl-[pyruvate, phosphate dikinase] + diphosphate. Its function is as follows. Bifunctional serine/threonine kinase and phosphorylase involved in the regulation of the pyruvate, phosphate dikinase (PPDK) by catalyzing its phosphorylation/dephosphorylation. The polypeptide is Putative pyruvate, phosphate dikinase regulatory protein (Ehrlichia ruminantium (strain Gardel)).